A 924-amino-acid polypeptide reads, in one-letter code: MNRRDFIKNTAIASAASVAGLSVPSSMLGAQEEDWKWDKAVCRFCGTGCGIMIARKDGKIVATKGDPAAPVNRGLNCIKGYFNAKIMYGEDRLVMPLLRMNEKGEFDKKGKFQQVSWQRAFDEMEKQFKKAYNELGVTGIGIFGSGQYTIQEGYAALKLAKAGFRTNNIDPNARHCMASAVVGFMQTFGVDEPSGCYDDIELTDTIITWGANMAEMHPILWSRVSDRKLSNLDKVKVVNLSTFSNRTSNIADIEIIFKPNTDLAIWNYIAREIVYNHPEAMDMKFIKDHCVFATGYADIGYGMRNNPNHPKFKESEKDTVEKENVITLDDEEATSLSYLGVKAGDKFEMKHQGVADKNWEISFEEFKKGLAPYTLEYTAKVAKGDDNESLEDFKKKLQELANLYIEKNRKVVSFWTMGFNQHTRGSWVNEQAYMVHFLLGKQAKPGSGAFSLTGQPSACGTAREVGTFSHRLPADMVVANPKHREISEKIWKVPAKTINPKPGSPYLNIMRDLEDGKIKFAWVQVNNPWQNTANANHWIAAAREMDNFIVVSDCYPGISAKVADLILPSAMIYEKWGAYGNAERRTQHWKQQVLPVGAAMSDTWQILEFAKRFKLKEVWKEQKVDNKLTLPSVLEEAKAMGYSEDDTLFDVLFANKEAKSFNPNDAIAKGFDNTDVKGDERKIQGSDGKEFAGYGFFVQKYLWEEYRKFGLGHGHDLADFDTYHKVRGLRWPVVNGKETQWRFNTKFDYYAKKAAPNSDFAFYGDFNKMLTNGDLIAPKDEKEHSIKNKAKIFFRPFMKAPERPSKEYPFWLATGRVLEHWHSGTMTMRVPELYRAVPEALCYMSEKDGEKLGLNQGDLVWVESRRGKVKARVDMRGRNKPPVGLVYVPWFDENVYINKVTLDATCPLSKQTDFKKCAVKIYKA.

The tat-type signal signal peptide spans 1-30 (MNRRDFIKNTAIASAASVAGLSVPSSMLGA). Residues 35 to 91 (WKWDKAVCRFCGTGCGIMIARKDGKIVATKGDPAAPVNRGLNCIKGYFNAKIMYGED) enclose the 4Fe-4S Mo/W bis-MGD-type domain. [4Fe-4S] cluster contacts are provided by Cys42, Cys45, Cys49, and Cys77. Residues Lys79, Gln147, Asn172, Cys176, 209 to 216 (WGANMAEM), Met417, Gln421, Asn527, 552 to 553 (SD), Lys575, Asp602, and 814 to 823 (TGRVLEHWHS) each bind Mo-bis(molybdopterin guanine dinucleotide). Trp890 is a binding site for substrate. Mo-bis(molybdopterin guanine dinucleotide) is bound by residues Asn898 and Lys915.

This sequence belongs to the prokaryotic molybdopterin-containing oxidoreductase family. NasA/NapA/NarB subfamily. In terms of assembly, component of the periplasmic nitrate reductase NapAB complex composed of NapA and NapB. [4Fe-4S] cluster is required as a cofactor. Requires Mo-bis(molybdopterin guanine dinucleotide) as cofactor. Post-translationally, predicted to be exported by the Tat system. The position of the signal peptide cleavage has not been experimentally proven.

It localises to the periplasm. The enzyme catalyses 2 Fe(II)-[cytochrome] + nitrate + 2 H(+) = 2 Fe(III)-[cytochrome] + nitrite + H2O. Its function is as follows. Catalytic subunit of the periplasmic nitrate reductase complex NapAB. Receives electrons from NapB and catalyzes the reduction of nitrate to nitrite. The polypeptide is Periplasmic nitrate reductase (Campylobacter jejuni subsp. jejuni serotype O:6 (strain 81116 / NCTC 11828)).